The sequence spans 131 residues: Large-conductance mechanosensitive channel (131 aa).

3 consecutive transmembrane segments (helical) span residues 14-34 (IMDL…VTSL), 38-58 (IIMP…LAVT), and 67-87 (GSFI…FIVI).

The protein belongs to the MscL family. As to quaternary structure, homopentamer.

The protein localises to the cell membrane. In terms of biological role, channel that opens in response to stretch forces in the membrane lipid bilayer. May participate in the regulation of osmotic pressure changes within the cell. This Bacillus velezensis (strain DSM 23117 / BGSC 10A6 / LMG 26770 / FZB42) (Bacillus amyloliquefaciens subsp. plantarum) protein is Large-conductance mechanosensitive channel.